The chain runs to 508 residues: Photosystem II CP47 reaction center protein (508 aa).

Transmembrane regions (helical) follow at residues 21-36 (SVHIMHTALVAGWAGS), 101-115 (IVFSGLCFLAAIWHW), 140-156 (GIHLFLSGVACFGFGAF), 203-218 (IAAGTLGILAGLFHLS), 237-252 (VLSSSIAAVFFAAFVV), and 457-472 (SFALLFFFGHIWHGAR).

This sequence belongs to the PsbB/PsbC family. PsbB subfamily. In terms of assembly, PSII is composed of 1 copy each of membrane proteins PsbA, PsbB, PsbC, PsbD, PsbE, PsbF, PsbH, PsbI, PsbJ, PsbK, PsbL, PsbM, PsbT, PsbX, PsbY, PsbZ, Psb30/Ycf12, at least 3 peripheral proteins of the oxygen-evolving complex and a large number of cofactors. It forms dimeric complexes. The cofactor is Binds multiple chlorophylls. PSII binds additional chlorophylls, carotenoids and specific lipids..

It localises to the plastid. It is found in the chloroplast thylakoid membrane. Its function is as follows. One of the components of the core complex of photosystem II (PSII). It binds chlorophyll and helps catalyze the primary light-induced photochemical processes of PSII. PSII is a light-driven water:plastoquinone oxidoreductase, using light energy to abstract electrons from H(2)O, generating O(2) and a proton gradient subsequently used for ATP formation. The polypeptide is Photosystem II CP47 reaction center protein (Nasturtium officinale (Watercress)).